Here is a 120-residue protein sequence, read N- to C-terminus: Ubiquitin domain-containing protein TINCR (120 aa).

The region spanning Tyr-14–Val-83 is the Ubiquitin-like domain.

Detected in stratum corneum (at protein level).

This chain is Ubiquitin domain-containing protein TINCR, found in Homo sapiens (Human).